Reading from the N-terminus, the 654-residue chain is Macrolide export ATP-binding/permease protein MacB (654 aa).

The 239-residue stretch at 6–244 (IEISALNRIF…TSASSATDAA (239 aa)) folds into the ABC transporter domain. 42–49 (GTSGSGKS) contacts ATP. The next 4 helical transmembrane spans lie at 279 to 299 (LLTM…VAIG), 534 to 554 (IAVI…LVSV), 584 to 604 (MVCL…GALF), and 617 to 637 (VTAI…FGFL).

Belongs to the ABC transporter superfamily. Macrolide exporter (TC 3.A.1.122) family. In terms of assembly, homodimer. Part of the tripartite efflux system MacAB-TolC, which is composed of an inner membrane transporter, MacB, a periplasmic membrane fusion protein, MacA, and an outer membrane component, TolC. The complex forms a large protein conduit and can translocate molecules across both the inner and outer membranes. Interacts with MacA.

Its subcellular location is the cell inner membrane. Functionally, part of the tripartite efflux system MacAB-TolC. MacB is a non-canonical ABC transporter that contains transmembrane domains (TMD), which form a pore in the inner membrane, and an ATP-binding domain (NBD), which is responsible for energy generation. Confers resistance against macrolides. The polypeptide is Macrolide export ATP-binding/permease protein MacB (Hahella chejuensis (strain KCTC 2396)).